Reading from the N-terminus, the 1310-residue chain is MSRRKQAKPRSLKDPNCKLEDTSEDGESPDCKKRQEEGDELEEEEAVHSCDSCLQVFESLSDITEHKISQCQLTDGADIEDDPTCSWPASSPSSKDQASPIHGEGFDFGEEEGIPGLPYPCQFCDKSFSRLSYLKHHEQSHSDKLPFKCTYCSRLFKHKRSRDRHIKLHTGDKKYHCSECDASFSRSDHLKIHLKTHTSNKPYKCAICRRGFLSSSSLHGHMQVHERNKDCSQSGSRMEEWKMKDTQKCSQCEEGFDFPEDLQKHIAECHPECSPNDDRGALQCMYCHELFMEETSLLNHMEQIHNSEKKNSCNICSENFHSVEELYSHMDSHQHPESCNPSNSPSLVTVGYTSVSSTTPDSNLSVDSSTMVEVAPPLAKGRGRKRAVQQTGDAPTSKQARVSYSCIYCSKQLFSSLAVLQIHLKTMHLDKPEQAHICQYCLEVLPSLFNLNEHLKQVHETQDPALIVSTMSAMVYQCNFCSEIFNDLNMLQDHIRSSHGFPNPVTKDSNAFFCPHCYMGFLTDTSLEEHIRQVHCELGNSRFGSPVLGTPKEPVVEVYSCSYCTNSPIFNSVLKLNKHIKENHKNIPLALNYIHNGKKSRALSPLSPITLEQSSLKMMQSLGGTPSRLAGEYICNQCGAKYTSLDGFQTHLKTHLDTVLPKLTCPQCNKEFPNQESLLKHVTIHFMITSTYYICESCDKQFTSVDDLQKHLLDMHTFGFFRCTLCQEVFDSKVSIQLHLAVKHSNEKKVYRCTSCNWDFRTETDLQLHVKHNHLENQGKMHKCIFCGESFGTEVELQCHITTHSKKYNCKFCSKAFHAIILLEKHLREKHCVFEDKTQNCGTNGASEQIQKEEVELQTLLTNNQESHNSHDGSEEDIDTSEPMYGCDICGAAYTMESLLQNHQLRDHNIRPGESAIVKKKAELIKGNYKCNVCSRTFFSEGGLREHMQTHLGPVKHYMCPICGERFPSLLTLTEHKVTHSKSLDTGNCRICKLPLQCEEDFLEHCQMHPDLRNSLTGFRCVVCMQTVTSTLELKIHGTFHMQKTGTASVVQSAGRVQNLQKLYKCASCLKEFRSKQDLVKLDINGLPYGLCASCVNLSKSASPNANVTLSTNRQVISQTDSLTCVEAKNYKTSVLKTRCSSCNVKFESETELQNHIQTIHRELTSENSATQLKTPQVSPMARISPQSDEKKTYQCIKCQMVFYNEWDIQVHVANHMIDEGLNHECKLCSQTFDSPAKLQCHLIEHSFEGMGGTFKCPVCFTVFVQANKLQQHIFSAHGQEDKIYDCAQCPQKFFFQTELQNHTMSQHSS.

Over residues 1 to 10 (MSRRKQAKPR) the composition is skewed to basic residues. Residues 1 to 46 (MSRRKQAKPRSLKDPNCKLEDTSEDGESPDCKKRQEEGDELEEEEA) are disordered. The span at 11–21 (SLKDPNCKLED) shows a compositional bias: basic and acidic residues. A C2H2-type 1; degenerate zinc finger spans residues 48-68 (HSCDSCLQVFESLSDITEHKI). Positions 82-106 (DPTCSWPASSPSSKDQASPIHGEGF) are disordered. The segment covering 87–97 (WPASSPSSKDQ) has biased composition (polar residues). 7 consecutive C2H2-type zinc fingers follow at residues 119-141 (YPCQFCDKSFSRLSYLKHHEQSH), 147-169 (FKCTYCSRLFKHKRSRDRHIKLH), 175-197 (YHCSECDASFSRSDHLKIHLKTH), 203-225 (YKCAICRRGFLSSSSLHGHMQVH), 247-270 (QKCSQCEEGFDFPEDLQKHIAECH), 282-305 (LQCMYCHELFMEETSLLNHMEQIH), and 311-333 (NSCNICSENFHSVEELYSHMDSH). The segment at 404–428 (YSCIYCSKQLFSSLAVLQIHLKTMH) adopts a C2H2-type 9; degenerate zinc-finger fold. 3 C2H2-type zinc fingers span residues 436–459 (HICQYCLEVLPSLFNLNEHLKQVH), 476–499 (YQCNFCSEIFNDLNMLQDHIRSSH), and 512–535 (FFCPHCYMGFLTDTSLEEHIRQVH). A C2H2-type 13; atypical zinc finger spans residues 559 to 584 (YSCSYCTNSPIFNSVLKLNKHIKENH). C2H2-type zinc fingers lie at residues 633-655 (YICNQCGAKYTSLDGFQTHLKTH), 663-685 (LTCPQCNKEFPNQESLLKHVTIH), 693-716 (YICESCDKQFTSVDDLQKHLLDMH), 721-744 (FRCTLCQEVFDSKVSIQLHLAVKH), 751-774 (YRCTSCNWDFRTETDLQLHVKHNH), 782-804 (HKCIFCGESFGTEVELQCHITTH), and 808-831 (YNCKFCSKAFHAIILLEKHLREKH). The segment at 885-907 (YGCDICGAAYTMESLLQNHQLRD) adopts a C2H2-type 21; degenerate zinc-finger fold. 3 consecutive C2H2-type zinc fingers follow at residues 929-951 (YKCNVCSRTFFSEGGLREHMQTH), 958-980 (YMCPICGERFPSLLTLTEHKVTH), and 1019-1041 (FRCVVCMQTVTSTLELKIHGTFH). The C2H2-type 25; degenerate zinc finger occupies 1064–1082 (YKCASCLKEFRSKQDLVKL). C2H2-type zinc fingers lie at residues 1138-1161 (TRCSSCNVKFESETELQNHIQTIH), 1194-1216 (YQCIKCQMVFYNEWDIQVHVANH), 1224-1246 (HECKLCSQTFDSPAKLQCHLIEH), 1255-1278 (FKCPVCFTVFVQANKLQQHIFSAH), and 1285-1308 (YDCAQCPQKFFFQTELQNHTMSQH).

The protein belongs to the krueppel C2H2-type zinc-finger protein family.

It localises to the nucleus. In terms of biological role, transcription factor that can both act as an activator or a repressor depending on the context. Involved in BMP signaling and in the regulation of the immature compartment of the hematopoietic system. The polypeptide is Zinc finger protein 521 (znf521) (Xenopus laevis (African clawed frog)).